The sequence spans 295 residues: Bifunctional protein FolD (295 aa).

NADP(+) is bound by residues 166–168 (GRS), S191, and I232.

This sequence belongs to the tetrahydrofolate dehydrogenase/cyclohydrolase family. Homodimer.

It catalyses the reaction (6R)-5,10-methylene-5,6,7,8-tetrahydrofolate + NADP(+) = (6R)-5,10-methenyltetrahydrofolate + NADPH. The catalysed reaction is (6R)-5,10-methenyltetrahydrofolate + H2O = (6R)-10-formyltetrahydrofolate + H(+). It functions in the pathway one-carbon metabolism; tetrahydrofolate interconversion. Its function is as follows. Catalyzes the oxidation of 5,10-methylenetetrahydrofolate to 5,10-methenyltetrahydrofolate and then the hydrolysis of 5,10-methenyltetrahydrofolate to 10-formyltetrahydrofolate. The chain is Bifunctional protein FolD from Rhodopseudomonas palustris (strain BisA53).